A 600-amino-acid chain; its full sequence is UPF0588 membrane protein C20F10.02c (600 aa).

Transmembrane regions (helical) follow at residues 409 to 429 and 437 to 457; these read LSAT…TSLV and YHWL…SVLI.

This sequence belongs to the UPF0588 family.

It is found in the membrane. This Schizosaccharomyces pombe (strain 972 / ATCC 24843) (Fission yeast) protein is UPF0588 membrane protein C20F10.02c.